A 556-amino-acid polypeptide reads, in one-letter code: 5-aminolevulinate synthase, mitochondrial (556 aa).

A mitochondrion-targeting transit peptide spans 1-46 (MDSLARQSAKICPFVSRVTSSMQQVQVLHKTNMSAMAQQCPVMRRA). Positions 105, 218, and 237 each coordinate substrate. Pyridoxal 5'-phosphate-binding residues include serine 270, histidine 298, and threonine 342. Lysine 345 is an active-site residue. Position 345 is an N6-(pyridoxal phosphate)lysine (lysine 345). Positions 374 and 375 each coordinate pyridoxal 5'-phosphate. Position 460 (threonine 460) interacts with substrate.

It belongs to the class-II pyridoxal-phosphate-dependent aminotransferase family. Homodimer. It depends on pyridoxal 5'-phosphate as a cofactor.

It localises to the mitochondrion matrix. The catalysed reaction is succinyl-CoA + glycine + H(+) = 5-aminolevulinate + CO2 + CoA. The protein operates within porphyrin-containing compound metabolism; protoporphyrin-IX biosynthesis; 5-aminolevulinate from glycine: step 1/1. Catalyzes the synthesis of 5-aminolevulinate (ALA) from succinyl-CoA and glycine, the first and rate-limiting step in heme biosynthesis. The protein is 5-aminolevulinate synthase, mitochondrial (HEM1) of Eremothecium gossypii (strain ATCC 10895 / CBS 109.51 / FGSC 9923 / NRRL Y-1056) (Yeast).